The primary structure comprises 276 residues: Large ribosomal subunit protein uL2 (276 aa).

A disordered region spans residues 224-258 (VAMNPVDHPHGGGEGRTGEGRVPVSPWGTPTKGYR). Over residues 230-242 (DHPHGGGEGRTGE) the composition is skewed to basic and acidic residues.

It belongs to the universal ribosomal protein uL2 family. In terms of assembly, part of the 50S ribosomal subunit. Forms a bridge to the 30S subunit in the 70S ribosome.

One of the primary rRNA binding proteins. Required for association of the 30S and 50S subunits to form the 70S ribosome, for tRNA binding and peptide bond formation. It has been suggested to have peptidyltransferase activity; this is somewhat controversial. Makes several contacts with the 16S rRNA in the 70S ribosome. The protein is Large ribosomal subunit protein uL2 of Polynucleobacter necessarius subsp. necessarius (strain STIR1).